Consider the following 931-residue polypeptide: NEDD4-binding protein 1 (931 aa).

The region spanning 75–159 is the KH-like domain; it reads GKAVRSAKEY…VQQFVKLFEN (85 aa). Disordered regions lie at residues 289-329, 413-474, and 547-571; these read MTSK…HNDS, QEWS…TQVD, and CTSAKSKTAVHQKSAGPSPVQNSHS. 2 stretches are compositionally biased toward basic and acidic residues: residues 290–309 and 319–329; these read TSKERQSCKRRFSDAEESLP and QEVKSVSHNDS. A compositionally biased stretch (polar residues) spans 416–434; the sequence is SSKTPKTTNLRLGSNANSS. Composition is skewed to basic and acidic residues over residues 435–444 and 456–467; these read HKLEDEDISC and NETRTERHKARD. Polar residues predominate over residues 547-557; the sequence is CTSAKSKTAVH. In terms of domain architecture, RNase NYN spans 659 to 811; it reads LKHIIIDGSN…LGRNGPRLDD (153 aa). Positions 841 to 863 are disordered; sequence LFMHVPNPASSSQQPKNRAHGDH. The tract at residues 884–931 is coCUN; it reads RSASETVWLREALIKIFPDYEQRQKIDKILADHPFMRDLNALSAMVLD.

It belongs to the N4BP1 family.

It is found in the cytoplasm. It localises to the cytosol. Its subcellular location is the nucleus. The protein localises to the nucleolus. The protein resides in the PML body. Functionally, potent suppressor of cytokine production that acts as a regulator of innate immune signaling and inflammation. Acts as a key negative regulator of select cytokine and chemokine responses elicited by TRIF-independent Toll-like receptors (TLRs), thereby limiting inflammatory cytokine responses to minor insults. Has ribonuclease activity. This chain is NEDD4-binding protein 1, found in Gallus gallus (Chicken).